Here is a 340-residue protein sequence, read N- to C-terminus: HTH-type transcriptional regulator PtxS (340 aa).

Positions 12–67 (VTINQVAEAAGVSKASVSRYIGGDRQLLADATARRIERAIDQLDYRPNQMARGLKR) constitute an HTH lacI-type domain. The H-T-H motif DNA-binding region spans 14–33 (INQVAEAAGVSKASVSRYIG).

As to quaternary structure, interacts with PtxR in the absence of 2-ketogluconate. Binding of the 2-ketogluconate effector to PtxS causes PtxS/PtxR complex dissociation.

Its activity is regulated as follows. 2-ketogluconate acts as a molecular effector and causes dissociation of the PtxS/PtxR complex. Functionally, negatively regulates glucose metabolism by binding directly to the promoter region of the kgu and gad operons. It also negatively regulates its own synthesis. In addition, in pathogenic strains, PtxS modulates PtxR activity in response to 2-ketogluconate. In the presence of PtxR, which also binds to the kgu and gad promoter regions, PtxS and PtxR form a tight complex, creating a DNA-loop that prevents RNA polymerase promoter access and expression of the glucose metabolism genes. Binding of the 2-ketogluconate effector to PtxS causes PtxS/PtxR complex dissociation and leads to the dissolution of the repression DNA-loop, facilitating the entry of the RNA polymerase and enabling the transcription of the genes. Also plays an important role in the regulation of the expression of the virulence factor exotoxin A (toxA). PtxS does not bind directly to the toxA promoter but negatively regulates the production of exotoxin A by binding to PtxR and interfering with its positive regulator activity. In the presence of 2-ketogluconate, PtxS is released and PtxR can recruit RNA polymerase. The sequence is that of HTH-type transcriptional regulator PtxS from Pseudomonas aeruginosa (strain ATCC 15692 / DSM 22644 / CIP 104116 / JCM 14847 / LMG 12228 / 1C / PRS 101 / PAO1).